Here is a 537-residue protein sequence, read N- to C-terminus: MEGLLSVALQGAELEGNWKHEGQVEDLQENQESCPEPEAVACKGDPAGDSMQERDEFSRIPRTISSPAATQASVPDDSSSRRCSAPGESPKERHPDSRQRERGGGPKKPWKCGDCGKAFSYCSAFILHQRIHTGEKPFACPECGKAFSQSVHLTLHQRTHTGEKPYACHECGKAFSQGSYLASHWRTHTGEKPHRCADCGKAFTRVTHLTQHRRVHTGERPYACAQCAKAFRNRSSLIEHQRIHTGEKPYECSACAKAFRFSSALIRHQRIHTEEKPYRCGQCAKAFAQIAHLTQHRRVHTGEKPYTCQDCGALFSQSASLAEHRRIHTGEKPYACGQCAKAFTQVSHLTQHQRTHTGERPYPCHDCGKRFSNRSHLLQHRLVHTGERPYRCLQCGAAFSHVSSLIEHQKIHTGERPYKCGECGKAFSQGSSLALHQRTHTGERPYTCPECGKAFSNRSYLIQHHIVHTGEKPYECSGCGKAFSFSSALIRHQRTHADSSGRLCPAPTPDSTPGLSQGGETCQQGCPGRNPRGPAED.

Residues 12-109 (AELEGNWKHE…RERGGGPKKP (98 aa)) form a disordered region. Positions 63 to 77 (TISSPAATQASVPDD) are enriched in polar residues. Residues 89 to 104 (SPKERHPDSRQRERGG) show a composition bias toward basic and acidic residues. C2H2-type zinc fingers lie at residues 110-132 (WKCGDCGKAFSYCSAFILHQRIH), 138-160 (FACPECGKAFSQSVHLTLHQRTH), 166-188 (YACHECGKAFSQGSYLASHWRTH), 194-216 (HRCADCGKAFTRVTHLTQHRRVH), 222-244 (YACAQCAKAFRNRSSLIEHQRIH), 250-272 (YECSACAKAFRFSSALIRHQRIH), 278-300 (YRCGQCAKAFAQIAHLTQHRRVH), 306-328 (YTCQDCGALFSQSASLAEHRRIH), 334-356 (YACGQCAKAFTQVSHLTQHQRTH), 362-384 (YPCHDCGKRFSNRSHLLQHRLVH), 390-412 (YRCLQCGAAFSHVSSLIEHQKIH), 418-440 (YKCGECGKAFSQGSSLALHQRTH), 446-468 (YTCPECGKAFSNRSYLIQHHIVH), and 474-496 (YECSGCGKAFSFSSALIRHQRTH). The segment at 497 to 537 (ADSSGRLCPAPTPDSTPGLSQGGETCQQGCPGRNPRGPAED) is disordered. A compositionally biased stretch (polar residues) spans 509–524 (PDSTPGLSQGGETCQQ).

The protein belongs to the krueppel C2H2-type zinc-finger protein family.

It localises to the nucleus. Functionally, may be involved in transcriptional regulation. The sequence is that of Zinc finger protein 835 (ZNF835) from Homo sapiens (Human).